Consider the following 522-residue polypeptide: 2-isopropylmalate synthase (522 aa).

One can recognise a Pyruvate carboxyltransferase domain in the interval 5 to 267 (VIIFDTTLRD…ETGINAKEIH (263 aa)). Asp14, His202, His204, and Asn238 together coordinate Mn(2+). The tract at residues 392–522 (QLRQLVVQSD…MHKNRELGGV (131 aa)) is regulatory domain.

The protein belongs to the alpha-IPM synthase/homocitrate synthase family. LeuA type 1 subfamily. Homodimer. The cofactor is Mn(2+).

The protein localises to the cytoplasm. The catalysed reaction is 3-methyl-2-oxobutanoate + acetyl-CoA + H2O = (2S)-2-isopropylmalate + CoA + H(+). Its pathway is amino-acid biosynthesis; L-leucine biosynthesis; L-leucine from 3-methyl-2-oxobutanoate: step 1/4. In terms of biological role, catalyzes the condensation of the acetyl group of acetyl-CoA with 3-methyl-2-oxobutanoate (2-ketoisovalerate) to form 3-carboxy-3-hydroxy-4-methylpentanoate (2-isopropylmalate). In Shewanella oneidensis (strain ATCC 700550 / JCM 31522 / CIP 106686 / LMG 19005 / NCIMB 14063 / MR-1), this protein is 2-isopropylmalate synthase.